Consider the following 320-residue polypeptide: Cytochrome f (320 aa).

An N-terminal signal peptide occupies residues 1–35 (MQNRNTFSWVKEPINRSISVLIIIYVITQTSISNA). The heme site is built by Tyr36, Cys56, Cys59, and His60. Residues 286-306 (VQGLLFFLASVTLAQIFLVLK) traverse the membrane as a helical segment.

The protein belongs to the cytochrome f family. The 4 large subunits of the cytochrome b6-f complex are cytochrome b6, subunit IV (17 kDa polypeptide, petD), cytochrome f and the Rieske protein, while the 4 small subunits are PetG, PetL, PetM and PetN. The complex functions as a dimer. Heme serves as cofactor.

It is found in the plastid. The protein resides in the chloroplast thylakoid membrane. Component of the cytochrome b6-f complex, which mediates electron transfer between photosystem II (PSII) and photosystem I (PSI), cyclic electron flow around PSI, and state transitions. This Piper cenocladum (Ant piper) protein is Cytochrome f.